The primary structure comprises 368 residues: F-box only protein 28 (368 aa).

Basic and acidic residues predominate over residues 1 to 11; sequence MAAASEERMAE. A disordered region spans residues 1–56; sequence MAAASEERMAEEGGGGHGDGGSCSAAGSAQRQPPAPPSQAPPPGSQAPAAPALAPD. Residues 12 to 21 show a composition bias toward gly residues; the sequence is EGGGGHGDGG. Positions 22-32 are enriched in low complexity; sequence SCSAAGSAQRQ. The segment covering 33–45 has biased composition (pro residues); that stretch reads PPAPPSQAPPPGS. Residues 46 to 55 are compositionally biased toward low complexity; it reads QAPAAPALAP. The F-box domain maps to 61-109; the sequence is NNTLVALPIVAIENILSFMSYDEISQLRLVCKRMDLVCQRMLNQGFLKV. 2 positions are modified to phosphoserine: Ser235 and Ser242. At Thr270 the chain carries Phosphothreonine. Residues 328–368 form a disordered region; that stretch reads MESAVGTSSGSGQSEESPRKRRKATEAIDSLRKSKRLRNRK. Phosphoserine is present on Ser344.

In terms of assembly, part of a SCF (SKP1-cullin-F-box) protein ligase complex.

It is found in the chromosome. The protein resides in the centromere. It localises to the kinetochore. Its function is as follows. Probably recognizes and binds to some phosphorylated proteins and promotes their ubiquitination and degradation. This chain is F-box only protein 28 (Fbxo28), found in Mus musculus (Mouse).